The chain runs to 215 residues: LexA repressor (215 aa).

The segment at residues 28–48 is a DNA-binding region (H-T-H motif); it reads RAEIAAELGFSSPNAAEEHLR. Residues Ser-133 and Lys-170 each act as for autocatalytic cleavage activity in the active site.

This sequence belongs to the peptidase S24 family. As to quaternary structure, homodimer.

It catalyses the reaction Hydrolysis of Ala-|-Gly bond in repressor LexA.. Represses a number of genes involved in the response to DNA damage (SOS response), including recA and lexA. In the presence of single-stranded DNA, RecA interacts with LexA causing an autocatalytic cleavage which disrupts the DNA-binding part of LexA, leading to derepression of the SOS regulon and eventually DNA repair. The polypeptide is LexA repressor (Burkholderia cenocepacia (strain ATCC BAA-245 / DSM 16553 / LMG 16656 / NCTC 13227 / J2315 / CF5610) (Burkholderia cepacia (strain J2315))).